The primary structure comprises 122 residues: UPF0102 protein XCV0816 (122 aa).

This sequence belongs to the UPF0102 family.

In Xanthomonas euvesicatoria pv. vesicatoria (strain 85-10) (Xanthomonas campestris pv. vesicatoria), this protein is UPF0102 protein XCV0816.